The sequence spans 307 residues: Branched-chain-amino-acid aminotransferase (307 aa).

An N6-(pyridoxal phosphate)lysine modification is found at Lys160.

It belongs to the class-IV pyridoxal-phosphate-dependent aminotransferase family. The cofactor is pyridoxal 5'-phosphate.

The catalysed reaction is L-leucine + 2-oxoglutarate = 4-methyl-2-oxopentanoate + L-glutamate. It catalyses the reaction L-isoleucine + 2-oxoglutarate = (S)-3-methyl-2-oxopentanoate + L-glutamate. The enzyme catalyses L-valine + 2-oxoglutarate = 3-methyl-2-oxobutanoate + L-glutamate. Its pathway is amino-acid biosynthesis; L-isoleucine biosynthesis; L-isoleucine from 2-oxobutanoate: step 4/4. It participates in amino-acid biosynthesis; L-leucine biosynthesis; L-leucine from 3-methyl-2-oxobutanoate: step 4/4. The protein operates within amino-acid biosynthesis; L-valine biosynthesis; L-valine from pyruvate: step 4/4. Acts on leucine, isoleucine and valine. The protein is Branched-chain-amino-acid aminotransferase (ilvE) of Pseudomonas aeruginosa (strain ATCC 15692 / DSM 22644 / CIP 104116 / JCM 14847 / LMG 12228 / 1C / PRS 101 / PAO1).